The primary structure comprises 515 residues: SWI/SNF-related matrix-associated actin-dependent regulator of chromatin subfamily D member 1 (515 aa).

Residues 1 to 128 (MAARAGFQSV…RNHNAKKKKM (128 aa)) form a disordered region. Gly residues predominate over residues 14 to 23 (GGAGASGGAG). Residues 43 to 167 (APGQGLYRSP…DQTIMRKRLD (125 aa)) form an interaction with ESR1, NR1H4, NR3C1, PGR and SMARCA4 region. 2 positions are modified to asymmetric dimethylarginine: arginine 68 and arginine 88. Lysine 101 is covalently cross-linked (Glycyl lysine isopeptide (Lys-Gly) (interchain with G-Cter in SUMO2)). Low complexity predominate over residues 104–117 (APQQIQQVQQQAVQ). An interaction with SMARCC1 and SMARCC2 region spans residues 168–474 (IQEALKRPIK…TMTDVVGNPE (307 aa)). The tract at residues 180 to 515 (RKLRIFISNT…LEQALGIRNT (336 aa)) is necessary for GR/NR3C1-mediated remodeling and transcription from chromatin; required for GR/NR3C1 interaction with the BRG1/SMARCA4 complex in vivo. Position 203 is a phosphothreonine (threonine 203). Residue lysine 223 is modified to N6-acetyllysine. One can recognise an SWIB/MDM2 domain in the interval 290–367 (YQPPQFKLDP…PQRLHALLMP (78 aa)). Residues 412–440 (ASQQEIATLDNKIHETIETINQLKTQREF) are a coiled coil.

This sequence belongs to the SMARCD family. Component of the multiprotein chromatin-remodeling complexes SWI/SNF: SWI/SNF-A (BAF), SWI/SNF-B (PBAF) and related complexes. The canonical complex contains a catalytic subunit (either SMARCA4/BRG1/BAF190A or SMARCA2/BRM/BAF190B), and at least SMARCE1, ACTL6A/BAF53, SMARCC1/BAF155, SMARCC2/BAF170, and SMARCB1/SNF5/BAF47. Other subunits specific to each of the complexes may also be present permitting several possible combinations developmentally and tissue specific. Component of the BAF complex, which includes at least actin (ACTB), ARID1A/BAF250A, ARID1B/BAF250B, SMARCA2/BRM, SMARCA4/BRG1/BAF190A, ACTL6A/BAF53, ACTL6B/BAF53B, SMARCE1/BAF57, SMARCC1/BAF155, SMARCC2/BAF170, SMARCB1/SNF5/INI1, and one or more SMARCD1/BAF60A, SMARCD2/BAF60B, or SMARCD3/BAF60C. In muscle cells, the BAF complex also contains DPF3. Component of neural progenitors-specific chromatin remodeling complex (npBAF complex) composed of at least, ARID1A/BAF250A or ARID1B/BAF250B, SMARCD1/BAF60A, SMARCD3/BAF60C, SMARCA2/BRM/BAF190B, SMARCA4/BRG1/BAF190A, SMARCB1/BAF47, SMARCC1/BAF155, SMARCE1/BAF57, SMARCC2/BAF170, PHF10/BAF45A, ACTL6A/BAF53A and actin. Component of neuron-specific chromatin remodeling complex (nBAF complex) composed of at least, ARID1A/BAF250A or ARID1B/BAF250B, SMARCD1/BAF60A, SMARCD3/BAF60C, SMARCA2/BRM/BAF190B, SMARCA4/BRG1/BAF190A, SMARCB1/BAF47, SMARCC1/BAF155, SMARCE1/BAF57, SMARCC2/BAF170, DPF1/BAF45B, DPF3/BAF45C, ACTL6B/BAF53B and actin. Component of the SWI/SNF-B (PBAF) chromatin remodeling complex, at least composed of SMARCA4/BRG1, SMARCB1/BAF47/SNF5, ACTL6A/BAF53A or ACTL6B/BAF53B, SMARCE1/BAF57, SMARCD1/BAF60A, SMARCD2/BAF60B, perhaps SMARCD3/BAF60C, SMARCC1/BAF155, SMARCC2/BAF170, PBRM1/BAF180, ARID2/BAF200 and actin (ACTB). Component of SWI/SNF (GBAF) subcomplex, which includes at least BICRA or BICRAL (mutually exclusive), BRD9, SS18, SMARCA2/BRM, SMARCA4/BRG1/BAF190A, ACTL6A/BAF53, SMARCC1/BAF155, and SMARCD1/BAF60A. Specifically interacts with the VDR heterodimer complex. Interacts with ESR1, NR3C1, NR1H4, PGR, SMARCA4, SMARCC1 and SMARCC2. Interacts with DPF2. Interacts with DPF3a (isoform 2 of DPF3/BAF45C) and with HDGFL2 in a DPF3a-dependent manner. Interacts with FOS, FOSB isoform 1 and 2, FOSL1 and FOSL2. Interacts with AKIRIN2. Ubiquitous.

Its subcellular location is the nucleus. Its function is as follows. Involved in transcriptional activation and repression of select genes by chromatin remodeling (alteration of DNA-nucleosome topology). Component of SWI/SNF chromatin remodeling complexes that carry out key enzymatic activities, changing chromatin structure by altering DNA-histone contacts within a nucleosome in an ATP-dependent manner. Belongs to the neural progenitors-specific chromatin remodeling complex (npBAF complex) and the neuron-specific chromatin remodeling complex (nBAF complex). During neural development a switch from a stem/progenitor to a postmitotic chromatin remodeling mechanism occurs as neurons exit the cell cycle and become committed to their adult state. The transition from proliferating neural stem/progenitor cells to postmitotic neurons requires a switch in subunit composition of the npBAF and nBAF complexes. As neural progenitors exit mitosis and differentiate into neurons, npBAF complexes which contain ACTL6A/BAF53A and PHF10/BAF45A, are exchanged for homologous alternative ACTL6B/BAF53B and DPF1/BAF45B or DPF3/BAF45C subunits in neuron-specific complexes (nBAF). The npBAF complex is essential for the self-renewal/proliferative capacity of the multipotent neural stem cells. The nBAF complex along with CREST plays a role regulating the activity of genes essential for dendrite growth. Has a strong influence on vitamin D-mediated transcriptional activity from an enhancer vitamin D receptor element (VDRE). May be a link between mammalian SWI-SNF-like chromatin remodeling complexes and the vitamin D receptor (VDR) heterodimer. Mediates critical interactions between nuclear receptors and the BRG1/SMARCA4 chromatin-remodeling complex for transactivation. The protein is SWI/SNF-related matrix-associated actin-dependent regulator of chromatin subfamily D member 1 (Smarcd1) of Mus musculus (Mouse).